The sequence spans 476 residues: Chromosomal replication initiator protein DnaA (476 aa).

The interval 1 to 87 (MSDRSDPTHA…AGVSNFAIVV (87 aa)) is domain I, interacts with DnaA modulators. A domain II region spans residues 87–131 (VNPGIAQDAFAQHPEPAEQPYIETPTITAPTDNPGLPASPSRGDS). Positions 132-348 (RLNPKYGFDT…GTLIRVTAFA (217 aa)) are domain III, AAA+ region. Positions 176, 178, 179, and 180 each coordinate ATP. Residues 349–476 (SLNKTPVDLA…IKQNHRYGKM (128 aa)) form a domain IV, binds dsDNA region.

It belongs to the DnaA family. Oligomerizes as a right-handed, spiral filament on DNA at oriC.

It is found in the cytoplasm. Functionally, plays an essential role in the initiation and regulation of chromosomal replication. ATP-DnaA binds to the origin of replication (oriC) to initiate formation of the DNA replication initiation complex once per cell cycle. Binds the DnaA box (a 9 base pair repeat at the origin) and separates the double-stranded (ds)DNA. Forms a right-handed helical filament on oriC DNA; dsDNA binds to the exterior of the filament while single-stranded (ss)DNA is stabiized in the filament's interior. The ATP-DnaA-oriC complex binds and stabilizes one strand of the AT-rich DNA unwinding element (DUE), permitting loading of DNA polymerase. After initiation quickly degrades to an ADP-DnaA complex that is not apt for DNA replication. Binds acidic phospholipids. This chain is Chromosomal replication initiator protein DnaA, found in Clavibacter sepedonicus (Clavibacter michiganensis subsp. sepedonicus).